A 273-amino-acid chain; its full sequence is Dermonecrotic toxin LhSicTox-alphaIA2avi (273 aa).

Histidine 5 is an active-site residue. Mg(2+)-binding residues include glutamate 25 and aspartate 27. Catalysis depends on histidine 41, which acts as the Nucleophile. Disulfide bonds link cysteine 45-cysteine 51 and cysteine 47-cysteine 190. Aspartate 85 serves as a coordination point for Mg(2+).

It belongs to the arthropod phospholipase D family. Class II subfamily. Mg(2+) serves as cofactor. In terms of tissue distribution, expressed by the venom gland.

The protein resides in the secreted. It catalyses the reaction an N-(acyl)-sphingosylphosphocholine = an N-(acyl)-sphingosyl-1,3-cyclic phosphate + choline. It carries out the reaction an N-(acyl)-sphingosylphosphoethanolamine = an N-(acyl)-sphingosyl-1,3-cyclic phosphate + ethanolamine. The catalysed reaction is a 1-acyl-sn-glycero-3-phosphocholine = a 1-acyl-sn-glycero-2,3-cyclic phosphate + choline. The enzyme catalyses a 1-acyl-sn-glycero-3-phosphoethanolamine = a 1-acyl-sn-glycero-2,3-cyclic phosphate + ethanolamine. Functionally, dermonecrotic toxins cleave the phosphodiester linkage between the phosphate and headgroup of certain phospholipids (sphingolipid and lysolipid substrates), forming an alcohol (often choline) and a cyclic phosphate. This toxin acts on sphingomyelin (SM). It may also act on ceramide phosphoethanolamine (CPE), lysophosphatidylcholine (LPC) and lysophosphatidylethanolamine (LPE), but not on lysophosphatidylserine (LPS), and lysophosphatidylglycerol (LPG). It acts by transphosphatidylation, releasing exclusively cyclic phosphate products as second products. Induces dermonecrosis, hemolysis, increased vascular permeability, edema, inflammatory response, and platelet aggregation. The sequence is that of Dermonecrotic toxin LhSicTox-alphaIA2avi from Loxosceles hirsuta (Recluse spider).